The sequence spans 260 residues: Alpha- and beta-fibrinogenase OhS1 (260 aa).

A signal peptide spans 1-18 (MALIRVLASLLILQLSYA). Positions 19 to 24 (VTPFDR) are excised as a propeptide. A Peptidase S1 domain is found at 25-248 (IIGGFECNEY…YIDWIEGIIA (224 aa)). 6 cysteine pairs are disulfide-bonded: Cys31-Cys163, Cys50-Cys66, Cys98-Cys255, Cys142-Cys209, Cys174-Cys188, and Cys199-Cys224. Asn44 carries an N-linked (GlcNAc...) asparagine glycan. Catalysis depends on His65, which acts as the Charge relay system. N-linked (GlcNAc...) asparagine glycosylation is present at Asn79. Asp110 serves as the catalytic Charge relay system. N-linked (GlcNAc...) asparagine glycans are attached at residues Asn117 and Asn121. Ser203 functions as the Charge relay system in the catalytic mechanism. The N-linked (GlcNAc...) asparagine glycan is linked to Asn250.

Belongs to the peptidase S1 family. Snake venom subfamily. Monomer. Expressed by the venom gland.

The protein localises to the secreted. Completely inhibited by NPGB, PMSF, diisopropylfluorophosphate (DFP), benzamidine and soybean trypsin inhibitor. Not inhibited by EDTA. Its function is as follows. Snake venom serine protease that possesses potent fibrinogenolytic (on both alpha- (FGA) and beta-chains (FGB)) and amidolytic activities. Selectively cleaves Arg-|-Xaa or Lys-|-Xaa bonds. This Ophiophagus hannah (King cobra) protein is Alpha- and beta-fibrinogenase OhS1.